We begin with the raw amino-acid sequence, 207 residues long: Probable GTP-binding protein EngB (207 aa).

The 172-residue stretch at 22–193 (RVPEIVFAGR…LAHFDHYLSG (172 aa)) folds into the EngB-type G domain. GTP contacts are provided by residues 30-37 (GRSNVGKS), 57-61 (GKTRL), 75-78 (DIPG), 142-145 (TKDD), and 172-174 (YSS). Positions 37 and 59 each coordinate Mg(2+).

The protein belongs to the TRAFAC class TrmE-Era-EngA-EngB-Septin-like GTPase superfamily. EngB GTPase family. Mg(2+) serves as cofactor.

Functionally, necessary for normal cell division and for the maintenance of normal septation. This is Probable GTP-binding protein EngB from Chlorobium luteolum (strain DSM 273 / BCRC 81028 / 2530) (Pelodictyon luteolum).